The primary structure comprises 642 residues: MSRIDYRSIGLKVGLEIHQQLDTREKLFCSCPAELGEEEHDEFVRQLRPTRSELGDVDPAALFEWRKGRLYIYQAPLNHSCLVEADEEPPHPINREAVAVAVAVAKALGSAIVDEVHVMRKTVIDGSNTSGFQRTAIVALGGSIRVGSKEVPIETIVIEEDAARKVGEKGRYVVYRLDRLGIPLIEIATAPVIESPGEAREVALAIGTMLRLTGKVKRGLGTIRQDLNVSIRGGAKTEIKGVQRLELIPRVIEYEVLRQLSLLRIRDMLRERGVSREELENVEPVDVSSLLAGSKSRVIKKVLSSGGKVIAVKLPRMKGIIGMEIMPGRRFGTELADYARFWGGVGGIIHSDELPGYGITGDEVEKIYEAVGGDPGVDAFALVADKPSNALRAARAVLERVAAALEGVPEETRAALEDGTTRYLRPRPGSARMYPETDIPPLRIDENILSMAEPLVPEPPEVVAMRLKKEYGLSDQLAWEVIRDERYRLIVSLLEKYRGTLEPSYVAGFFVVVLRGLEGEGVEVWKVDDAILEKILDMVAQGEIAREAAAELVKYLANNPGSTVEEAVEKLGLRRLSREEVERIVDEIVGGLREEILKRGEKAVGLVMGRAMAKLRGRADGRLVSEIVSRKIREILDSDGKG.

Belongs to the GatB/GatE family. GatE subfamily. In terms of assembly, heterodimer of GatD and GatE.

It catalyses the reaction L-glutamyl-tRNA(Gln) + L-glutamine + ATP + H2O = L-glutaminyl-tRNA(Gln) + L-glutamate + ADP + phosphate + H(+). Functionally, allows the formation of correctly charged Gln-tRNA(Gln) through the transamidation of misacylated Glu-tRNA(Gln) in organisms which lack glutaminyl-tRNA synthetase. The reaction takes place in the presence of glutamine and ATP through an activated gamma-phospho-Glu-tRNA(Gln). The GatDE system is specific for glutamate and does not act on aspartate. The chain is Glutamyl-tRNA(Gln) amidotransferase subunit E from Aeropyrum pernix (strain ATCC 700893 / DSM 11879 / JCM 9820 / NBRC 100138 / K1).